The chain runs to 199 residues: Probable chemoreceptor glutamine deamidase CheD (199 aa).

This sequence belongs to the CheD family.

It catalyses the reaction L-glutaminyl-[protein] + H2O = L-glutamyl-[protein] + NH4(+). In terms of biological role, probably deamidates glutamine residues to glutamate on methyl-accepting chemotaxis receptors (MCPs), playing an important role in chemotaxis. The protein is Probable chemoreceptor glutamine deamidase CheD of Nitratidesulfovibrio vulgaris (strain ATCC 29579 / DSM 644 / CCUG 34227 / NCIMB 8303 / VKM B-1760 / Hildenborough) (Desulfovibrio vulgaris).